The following is a 274-amino-acid chain: Bis(5'-nucleosyl)-tetraphosphatase, symmetrical (274 aa).

Belongs to the Ap4A hydrolase family.

It carries out the reaction P(1),P(4)-bis(5'-adenosyl) tetraphosphate + H2O = 2 ADP + 2 H(+). Functionally, hydrolyzes diadenosine 5',5'''-P1,P4-tetraphosphate to yield ADP. This Buchnera aphidicola subsp. Acyrthosiphon pisum (strain 5A) protein is Bis(5'-nucleosyl)-tetraphosphatase, symmetrical.